The chain runs to 817 residues: DNA replication licensing factor Mcm6 (817 aa).

The segment at 152–179 (CLDCQTEIRNVEQQFKFTNPTICRNPVC) adopts a C4-type zinc-finger fold. In terms of domain architecture, MCM spans 338–544 (LYQNLISSLF…VVDYAIARKI (207 aa)). Positions 391, 392, 393, 394, 395, and 496 each coordinate ATP. The Arginine finger motif lies at 520–523 (SRFD). Residues R611 and E614 each coordinate ADP.

Belongs to the MCM family. As to quaternary structure, component of the Mcm2-7 complex. The complex forms a toroidal hexameric ring with the proposed subunit order Mcm2-Mcm6-Mcm4-Mcm7-Mcm3-Mcm5. The heterodimers of Mcm4/Mcm6 and Mcm3/Mcm5 interact with Mcm2 and Mcm7. As to expression, in stage 12 embryos, strongly expressed in the CNS and weakly in the gut.

The protein resides in the nucleus. The catalysed reaction is ATP + H2O = ADP + phosphate + H(+). Its function is as follows. Acts as a component of the Mcm2-7 complex (Mcm complex) which is the putative replicative helicase essential for 'once per cell cycle' DNA replication initiation and elongation in eukaryotic cells. Core component of CDC45-MCM-GINS (CMG) helicase, the molecular machine that unwinds template DNA during replication, and around which the replisome is built. The active ATPase sites in the Mcm2-7 ring are formed through the interaction surfaces of two neighboring subunits such that a critical structure of a conserved arginine finger motif is provided in trans relative to the ATP-binding site of the Walker A box of the adjacent subunit. The six ATPase active sites, however, are likely to contribute differentially to the complex helicase activity Required for DNA replication and cell proliferation. Required for mitotic cycles, endocycles, and the special S phase associated with the amplification of chorion genes; has a role in origin unwinding or fork elongation at chorion loci. This chain is DNA replication licensing factor Mcm6, found in Drosophila melanogaster (Fruit fly).